We begin with the raw amino-acid sequence, 372 residues long: Cytochrome b (372 aa).

4 helical membrane-spanning segments follow: residues L32–W52, F77–I99, V114–T134, and L180–F200. H83 and H97 together coordinate heme b. The heme b site is built by H184 and H198. H203 contacts a ubiquinone. 4 consecutive transmembrane segments (helical) span residues Y228–C248, L297–I317, L330–F350, and P351–L371.

The protein belongs to the cytochrome b family. As to quaternary structure, the main subunits of complex b-c1 are: cytochrome b, cytochrome c1 and the Rieske protein. It depends on heme b as a cofactor.

It localises to the mitochondrion inner membrane. Functionally, component of the ubiquinol-cytochrome c reductase complex (complex III or cytochrome b-c1 complex) that is part of the mitochondrial respiratory chain. The b-c1 complex mediates electron transfer from ubiquinol to cytochrome c. Contributes to the generation of a proton gradient across the mitochondrial membrane that is then used for ATP synthesis. This is Cytochrome b (MT-CYB) from Trypanoplasma borreli.